We begin with the raw amino-acid sequence, 906 residues long: Protein translocase subunit SecA (906 aa).

ATP-binding positions include glutamine 86, 104–108 (GEGKT), and aspartate 499. Residues 862–885 (KPVVSRIDPKDRNPDDPTSWGRVS) form a disordered region. The Zn(2+) site is built by cysteine 890, cysteine 892, cysteine 901, and histidine 902.

The protein belongs to the SecA family. As to quaternary structure, monomer and homodimer. Part of the essential Sec protein translocation apparatus which comprises SecA, SecYEG and auxiliary proteins SecDF-YajC and YidC. Zn(2+) serves as cofactor.

It is found in the cell inner membrane. The protein resides in the cytoplasm. The enzyme catalyses ATP + H2O + cellular proteinSide 1 = ADP + phosphate + cellular proteinSide 2.. Functionally, part of the Sec protein translocase complex. Interacts with the SecYEG preprotein conducting channel. Has a central role in coupling the hydrolysis of ATP to the transfer of proteins into and across the cell membrane, serving both as a receptor for the preprotein-SecB complex and as an ATP-driven molecular motor driving the stepwise translocation of polypeptide chains across the membrane. This is Protein translocase subunit SecA from Rickettsia massiliae (strain Mtu5).